The chain runs to 256 residues: 3-deoxy-manno-octulosonate cytidylyltransferase (256 aa).

This sequence belongs to the KdsB family.

The protein localises to the cytoplasm. It catalyses the reaction 3-deoxy-alpha-D-manno-oct-2-ulosonate + CTP = CMP-3-deoxy-beta-D-manno-octulosonate + diphosphate. It functions in the pathway nucleotide-sugar biosynthesis; CMP-3-deoxy-D-manno-octulosonate biosynthesis; CMP-3-deoxy-D-manno-octulosonate from 3-deoxy-D-manno-octulosonate and CTP: step 1/1. It participates in bacterial outer membrane biogenesis; lipopolysaccharide biosynthesis. Its function is as follows. Activates KDO (a required 8-carbon sugar) for incorporation into bacterial lipopolysaccharide in Gram-negative bacteria. The sequence is that of 3-deoxy-manno-octulosonate cytidylyltransferase from Histophilus somni (strain 2336) (Haemophilus somnus).